The sequence spans 194 residues: Adenylate kinase (194 aa).

11 to 16 is an ATP binding site; it reads GSGKGT. Residues 31–60 form an NMP region; the sequence is STGELLRAEIKAQTELGQAAAGYINEGHLV. AMP contacts are provided by residues Thr-32, Arg-37, 58–60, 86–89, and Gln-93; these read HLV and GFPR. The LID stretch occupies residues 127–137; it reads NRGKISGRSDD. Position 128 (Arg-128) interacts with ATP. AMP contacts are provided by Arg-134 and Arg-145. Gly-173 lines the ATP pocket.

It belongs to the adenylate kinase family. Monomer.

It is found in the cytoplasm. It carries out the reaction AMP + ATP = 2 ADP. It functions in the pathway purine metabolism; AMP biosynthesis via salvage pathway; AMP from ADP: step 1/1. Catalyzes the reversible transfer of the terminal phosphate group between ATP and AMP. Plays an important role in cellular energy homeostasis and in adenine nucleotide metabolism. The polypeptide is Adenylate kinase (Porphyromonas gingivalis (strain ATCC 33277 / DSM 20709 / CIP 103683 / JCM 12257 / NCTC 11834 / 2561)).